Consider the following 81-residue polypeptide: Large ribosomal subunit protein bL31B (81 aa).

Belongs to the bacterial ribosomal protein bL31 family. Type B subfamily. Part of the 50S ribosomal subunit.

The protein is Large ribosomal subunit protein bL31B of Lactococcus lactis subsp. lactis (strain IL1403) (Streptococcus lactis).